The chain runs to 276 residues: 5'-nucleotidase SurE (276 aa).

Asp14, Asp15, Ser46, and Asn104 together coordinate a divalent metal cation.

This sequence belongs to the SurE nucleotidase family. The cofactor is a divalent metal cation.

The protein localises to the cytoplasm. The catalysed reaction is a ribonucleoside 5'-phosphate + H2O = a ribonucleoside + phosphate. Nucleotidase that shows phosphatase activity on nucleoside 5'-monophosphates. The sequence is that of 5'-nucleotidase SurE from Crocosphaera subtropica (strain ATCC 51142 / BH68) (Cyanothece sp. (strain ATCC 51142)).